The primary structure comprises 93 residues: Small ribosomal subunit protein uS19 (93 aa).

Belongs to the universal ribosomal protein uS19 family.

Functionally, protein S19 forms a complex with S13 that binds strongly to the 16S ribosomal RNA. This is Small ribosomal subunit protein uS19 from Geobacter metallireducens (strain ATCC 53774 / DSM 7210 / GS-15).